The sequence spans 20 residues: Implantin (20 aa).

The protein belongs to the EF-1-beta/EF-1-delta family. Post-translationally, phosphorylated. In terms of tissue distribution, uterus and embryo.

Its subcellular location is the cytoplasm. It localises to the nucleus. In terms of biological role, binds DNA. This is Implantin from Mus musculus (Mouse).